Consider the following 283-residue polypeptide: MLRIAVPNKGMLSEPAWNMLAEAGYRLRINPRQLVVQDPDNGIELFYLRPLDIAVYVGRGAIDVGITGQDLLKNSGTAALEHMPLGFGASTFRFAAPNESPITTLEDVQGKRVATTFDKLVHDYLVEHGIQAETIHLDGAVESSVQLGVADLIADVVSTGTTLRNAGLRVFAEPLMHSEACLIRSPRLNEQDPRLAVLTRRLQGVLTAHQYVLMDYDIPISKVAAAVAVTPGFESPTISPLHDKQWNAVRVMVPKAKVNQLMDDLYEVGARGIIVTALQASRM.

The protein belongs to the ATP phosphoribosyltransferase family. Long subfamily. Mg(2+) is required as a cofactor.

The protein resides in the cytoplasm. The enzyme catalyses 1-(5-phospho-beta-D-ribosyl)-ATP + diphosphate = 5-phospho-alpha-D-ribose 1-diphosphate + ATP. Its pathway is amino-acid biosynthesis; L-histidine biosynthesis; L-histidine from 5-phospho-alpha-D-ribose 1-diphosphate: step 1/9. Feedback inhibited by histidine. Its function is as follows. Catalyzes the condensation of ATP and 5-phosphoribose 1-diphosphate to form N'-(5'-phosphoribosyl)-ATP (PR-ATP). Has a crucial role in the pathway because the rate of histidine biosynthesis seems to be controlled primarily by regulation of HisG enzymatic activity. This chain is ATP phosphoribosyltransferase, found in Bifidobacterium longum subsp. infantis (strain ATCC 15697 / DSM 20088 / JCM 1222 / NCTC 11817 / S12).